Here is a 142-residue protein sequence, read N- to C-terminus: Sec-independent protein translocase protein TatB (142 aa).

The helical transmembrane segment at 1–21 (MFDFGFSELVVIGVVMLIVVG) threads the bilayer. The disordered stretch occupies residues 99–142 (AAPPDNTTSAESQAAADPAAVDSSQQLELRLDTTPKQVVGSDKA). Residues 107-124 (SAESQAAADPAAVDSSQQ) show a composition bias toward low complexity.

It belongs to the TatB family. As to quaternary structure, the Tat system comprises two distinct complexes: a TatABC complex, containing multiple copies of TatA, TatB and TatC subunits, and a separate TatA complex, containing only TatA subunits. Substrates initially bind to the TatABC complex, which probably triggers association of the separate TatA complex to form the active translocon.

It localises to the cell inner membrane. Its function is as follows. Part of the twin-arginine translocation (Tat) system that transports large folded proteins containing a characteristic twin-arginine motif in their signal peptide across membranes. Together with TatC, TatB is part of a receptor directly interacting with Tat signal peptides. TatB may form an oligomeric binding site that transiently accommodates folded Tat precursor proteins before their translocation. The polypeptide is Sec-independent protein translocase protein TatB (Azoarcus sp. (strain BH72)).